A 109-amino-acid polypeptide reads, in one-letter code: Probable gas vesicle protein J1 (109 aa).

It belongs to the gas vesicle GvpA family. Interacts with GvpA.

The protein resides in the gas vesicle. A minor component of the gas vesicle, might be involved in nucleating gas vesicle formation. Gas vesicles (GV) are hollow, gas filled proteinaceous nanostructures. It is not clear what function GVs perform in soil bacteria. This chain is Probable gas vesicle protein J1 (gvpJ1), found in Streptomyces coelicolor (strain ATCC BAA-471 / A3(2) / M145).